Consider the following 267-residue polypeptide: U6 snRNA phosphodiesterase 1 (267 aa).

Residues 1-72 (MNAAPLVGYS…EDDSARHGGR (72 aa)) form a disordered region. Residue histidine 122 is the Proton acceptor of the active site. 122–124 (HLS) provides a ligand contact to AMP. UMP contacts are provided by residues glutamine 166, tyrosine 204, and 208–212 (SFHVS). AMP is bound by residues tyrosine 204 and 206–212 (DPSFHVS). Histidine 210 serves as the catalytic Proton donor.

The protein belongs to the 2H phosphoesterase superfamily. USB1 family. Interacts with PLRG1, CDC5L and PRPF19.

Its subcellular location is the nucleus. It carries out the reaction a 3'-end uridylyl-uridine-RNA = a 3'-end 2',3'-cyclophospho-uridine-RNA + uridine. It catalyses the reaction a 3'-end uridylyl-adenosine-RNA = a 3'-end 2',3'-cyclophospho-uridine-RNA + adenosine. 3'-5' RNA exonuclease that trims the 3' end of oligo(U) and oligo(A) tracts of the pre-U6 small nuclear RNA (snRNA) molecule, leading to the formation of a mature U6 snRNA 3' end-terminated with a 2',3'-cyclic phosphate. Participates in the U6 snRNA 3' end processing that prevents U6 snRNA degradation. In addition also removes uridines from the 3' end of U6atac snRNA and possibly the vault RNA VTRNA1-1. The polypeptide is U6 snRNA phosphodiesterase 1 (Rattus norvegicus (Rat)).